Consider the following 779-residue polypeptide: Protein WEAK CHLOROPLAST MOVEMENT UNDER BLUE LIGHT-like 1 (779 aa).

A disordered region spans residues 1-119 (MEDLKTTDAL…NAVSPRPLYS (119 aa)). The span at 79–88 (DSPTTPSFVS) shows a compositional bias: polar residues. Position 139 is a phosphoserine (serine 139). 3 coiled-coil regions span residues 182-503 (RMKV…KQRE), 532-587 (KETR…ESRL), and 657-715 (AVSE…KWRE). Over residues 650–661 (ANARVAAAVSEV) the composition is skewed to low complexity. Disordered regions lie at residues 650–674 (ANARVAAAVSEVGEAKETEKRSLEK) and 694–759 (EKAE…NPVK). 2 stretches are compositionally biased toward basic and acidic residues: residues 662 to 674 (GEAKETEKRSLEK) and 694 to 718 (EKAEKAKEGKLGVEQELRKWREVSE). The span at 741–753 (TSVSNETETNPIP) shows a compositional bias: polar residues.

It belongs to the WEB family.

The chain is Protein WEAK CHLOROPLAST MOVEMENT UNDER BLUE LIGHT-like 1 (WEL1) from Arabidopsis thaliana (Mouse-ear cress).